The sequence spans 77 residues: Sec-independent protein translocase protein TatA 2 (77 aa).

Residues 2–22 (FPGGISMTELIIILAVILLLF) traverse the membrane as a helical segment. Positions 52–77 (KEVKAEDVKTEERKEEKKEEKEKVEA) are disordered.

This sequence belongs to the TatA/E family. As to quaternary structure, forms a complex with TatC.

It is found in the cell inner membrane. Part of the twin-arginine translocation (Tat) system that transports large folded proteins containing a characteristic twin-arginine motif in their signal peptide across membranes. TatA could form the protein-conducting channel of the Tat system. The polypeptide is Sec-independent protein translocase protein TatA 2 (Aquifex aeolicus (strain VF5)).